A 376-amino-acid polypeptide reads, in one-letter code: Glutamate 5-kinase (376 aa).

Lys-15 serves as a coordination point for ATP. 3 residues coordinate substrate: Ser-56, Asp-143, and Asn-155. 175–176 (SD) is an ATP binding site. A PUA domain is found at 281-358 (KGTLTIDAGA…PDVMMILGIS (78 aa)).

It belongs to the glutamate 5-kinase family.

It is found in the cytoplasm. It carries out the reaction L-glutamate + ATP = L-glutamyl 5-phosphate + ADP. It participates in amino-acid biosynthesis; L-proline biosynthesis; L-glutamate 5-semialdehyde from L-glutamate: step 1/2. Functionally, catalyzes the transfer of a phosphate group to glutamate to form L-glutamate 5-phosphate. This chain is Glutamate 5-kinase, found in Rhodopseudomonas palustris (strain BisB5).